The chain runs to 63 residues: Potassium channel toxin Sp4 (63 aa).

A signal peptide spans 1-20 (MNKVHFALFLLVLTVLAVSG). Disulfide bonds link Cys31–Cys53, Cys38–Cys58, and Cys42–Cys60.

The protein belongs to the long chain scorpion toxin family. Class 2 subfamily. As to expression, expressed by the venom gland.

It is found in the secreted. Its function is as follows. This recombinant toxin selectively inhibits mouse voltage-gated potassium channel Kv1.3/KCNA3 (IC(50)=24.73 nM). In Scorpiops pococki (Scorpion), this protein is Potassium channel toxin Sp4.